The chain runs to 162 residues: Probable chorismate pyruvate-lyase (162 aa).

Residues Arg-54, Leu-92, and Glu-149 each coordinate substrate.

The protein belongs to the UbiC family.

It localises to the cytoplasm. It catalyses the reaction chorismate = 4-hydroxybenzoate + pyruvate. Its pathway is cofactor biosynthesis; ubiquinone biosynthesis. Its function is as follows. Removes the pyruvyl group from chorismate, with concomitant aromatization of the ring, to provide 4-hydroxybenzoate (4HB) for the ubiquinone pathway. The sequence is that of Probable chorismate pyruvate-lyase from Methylococcus capsulatus (strain ATCC 33009 / NCIMB 11132 / Bath).